A 270-amino-acid polypeptide reads, in one-letter code: Putative pyruvate, phosphate dikinase regulatory protein (270 aa).

151–158 (GVSRTSKT) contacts ADP.

This sequence belongs to the pyruvate, phosphate/water dikinase regulatory protein family. PDRP subfamily.

The enzyme catalyses N(tele)-phospho-L-histidyl/L-threonyl-[pyruvate, phosphate dikinase] + ADP = N(tele)-phospho-L-histidyl/O-phospho-L-threonyl-[pyruvate, phosphate dikinase] + AMP + H(+). It carries out the reaction N(tele)-phospho-L-histidyl/O-phospho-L-threonyl-[pyruvate, phosphate dikinase] + phosphate + H(+) = N(tele)-phospho-L-histidyl/L-threonyl-[pyruvate, phosphate dikinase] + diphosphate. In terms of biological role, bifunctional serine/threonine kinase and phosphorylase involved in the regulation of the pyruvate, phosphate dikinase (PPDK) by catalyzing its phosphorylation/dephosphorylation. The chain is Putative pyruvate, phosphate dikinase regulatory protein from Lysinibacillus sphaericus (strain C3-41).